Reading from the N-terminus, the 215-residue chain is Ribosomal RNA small subunit methyltransferase G (215 aa).

S-adenosyl-L-methionine is bound by residues Gly77, Phe82, 130 to 131 (IE), and Arg146.

The protein belongs to the methyltransferase superfamily. RNA methyltransferase RsmG family.

It is found in the cytoplasm. It catalyses the reaction guanosine(527) in 16S rRNA + S-adenosyl-L-methionine = N(7)-methylguanosine(527) in 16S rRNA + S-adenosyl-L-homocysteine. Specifically methylates the N7 position of guanine in position 527 of 16S rRNA. This chain is Ribosomal RNA small subunit methyltransferase G, found in Bartonella quintana (strain Toulouse) (Rochalimaea quintana).